A 74-amino-acid chain; its full sequence is UPF0435 protein BAA_0470 (74 aa).

This sequence belongs to the UPF0435 family.

The chain is UPF0435 protein BAA_0470 from Bacillus anthracis (strain A0248).